A 211-amino-acid polypeptide reads, in one-letter code: Pyridoxine/pyridoxamine 5'-phosphate oxidase (211 aa).

Substrate is bound by residues arginine 7 to tyrosine 10 and lysine 65. FMN-binding positions include arginine 60–lysine 65, tyrosine 75–threonine 76, arginine 81, lysine 82, and glutamine 104. Positions 122, 126, and 130 each coordinate substrate. FMN contacts are provided by residues glutamine 139–serine 140 and tryptophan 184. Arginine 190–histidine 192 provides a ligand contact to substrate. Arginine 194 is an FMN binding site.

The protein belongs to the pyridoxamine 5'-phosphate oxidase family. As to quaternary structure, homodimer. FMN serves as cofactor.

The enzyme catalyses pyridoxamine 5'-phosphate + O2 + H2O = pyridoxal 5'-phosphate + H2O2 + NH4(+). The catalysed reaction is pyridoxine 5'-phosphate + O2 = pyridoxal 5'-phosphate + H2O2. The protein operates within cofactor metabolism; pyridoxal 5'-phosphate salvage; pyridoxal 5'-phosphate from pyridoxamine 5'-phosphate: step 1/1. It functions in the pathway cofactor metabolism; pyridoxal 5'-phosphate salvage; pyridoxal 5'-phosphate from pyridoxine 5'-phosphate: step 1/1. Catalyzes the oxidation of either pyridoxine 5'-phosphate (PNP) or pyridoxamine 5'-phosphate (PMP) into pyridoxal 5'-phosphate (PLP). The chain is Pyridoxine/pyridoxamine 5'-phosphate oxidase from Vibrio atlanticus (strain LGP32) (Vibrio splendidus (strain Mel32)).